A 1030-amino-acid polypeptide reads, in one-letter code: Toll-like receptor 9 (1030 aa).

An N-terminal signal peptide occupies residues 1-24 (MGPRCTLHPLSLLVQVTALAAALA). The Extracellular segment spans residues 25–816 (QGRLPAFLPC…LCLDETLSWN (792 aa)). An intrachain disulfide couples Cys34 to Cys44. Residue 46–50 (WLFLK) coordinates DNA. LRR repeat units follow at residues 61 to 84 (RANV…DFVH), 86 to 109 (SSLR…HFPC), 121 to 146 (VPTL…SLVS), 149 to 165 (LSRT…LTGL), 166 to 189 (HALR…ALEV), 197 to 220 (LGNL…LPPS), 222 to 241 (ETLL…DLAN), 242 to 267 (LTAL…CREC), 282 to 305 (LSRL…WFRG), 307 to 331 (DRLQ…AFQG), 332 to 355 (LARL…HLHL), 362 to 385 (LRSL…TLQP), 389 to 412 (LPML…IFGA), 414 to 439 (PGLL…TREV), 469 to 493 (CKAF…MFAR), 495 to 518 (SRLE…QFVP), 519 to 542 (LTSL…SFTE), 544 to 571 (PRLE…SFVA), 573 to 597 (LPAL…LCSA), 599 to 621 (LCAL…LYLR), 626 to 649 (LRSL…ALDN), 651 to 674 (PKSL…SLTL), 675 to 698 (LPKL…SLPS), 700 to 722 (TQLR…FFAL), 723 to 746 (AKQL…WFGS), and 748 to 771 (VGNL…TFVG). The N-linked (GlcNAc...) asparagine glycan is linked to Asn63. DNA-binding positions include 71–76 (SNRIHH) and 94–108 (KWNC…MHFP). Cys97 and Cys109 form a disulfide bridge. The N-linked (GlcNAc...) asparagine glycan is linked to Asn128. DNA-binding positions include Tyr131, Arg151, and 178–180 (YYK). A disulfide bond links Cys177 and Cys183. Residue Asn199 is glycosylated (N-linked (GlcNAc...) asparagine). Position 207 (Tyr207) interacts with DNA. Residues Asn209 and Asn241 are each glycosylated (N-linked (GlcNAc...) asparagine). 2 cysteine pairs are disulfide-bonded: Cys254/Cys267 and Cys257/Cys264. Cys257 is lipidated: S-palmitoyl cysteine. Residue Arg261 coordinates DNA. The S-palmitoyl cysteine moiety is linked to residue Cys264. Asn339 carries N-linked (GlcNAc...) asparagine glycosylation. A disulfide bridge links Cys469 with Cys499. N-linked (GlcNAc...) asparagine glycosylation is present at Asn512. Asn566 is a glycosylation site (N-linked (GlcNAc...) asparagine). N-linked (GlcNAc...) asparagine glycans are attached at residues Asn668 and Asn693. A glycan (N-linked (GlcNAc...) asparagine) is linked at Asn730. Cystine bridges form between Cys763–Cys789 and Cys765–Cys808. Residues 817-837 (CFGISLLAMALGLVVPMLHHL) traverse the membrane as a helical segment. The Cytoplasmic portion of the chain corresponds to 838–1030 (CGWDLWYCFH…NFCRGPTTAE (193 aa)). Residues 865 to 1010 (LFYDAFVVFD…SFWAQLGTAL (146 aa)) enclose the TIR domain.

It belongs to the Toll-like receptor family. As to quaternary structure, monomer and homodimer. Exists as a monomer in the absence of unmethylated cytidine-phosphate-guanosine (CpG) ligand. Proteolytic processing of an insertion loop (Z-loop) is required for homodimerization upon binding to the unmethylated CpG ligand leading to its activation. Interacts with MYD88 via their respective TIR domains. Interacts with BTK. Interacts (via transmembrane domain) with UNC93B1. Interacts with CD300LH; the interaction may promote full activation of TLR9-triggered innate responses. Interacts with CNPY3 and HSP90B1; this interaction is required for proper folding in the endoplasmic reticulum. Interacts with SMPDL3B. Interacts with CD82; this interaction is essential for TLR9-dependent myddosome formation in response to CpG stimulation. Activated by proteolytic cleavage of the flexible loop between repeats LRR14 and LRR15 within the ectodomain. Cleavage requires UNC93B1. Proteolytically processed by first removing the majority of the ectodomain by either asparagine endopeptidase (AEP) or a cathepsin followed by a trimming event that is solely cathepsin mediated and required for optimal receptor signaling. Post-translationally, palmitoylated by ZDHHC3 in the Golgi regulates TLR9 trafficking from the Golgi to endosomes. Depalmitoylation by PPT1 controls the release of TLR9 from UNC93B1 in endosomes.

It is found in the endoplasmic reticulum membrane. The protein resides in the endosome. It localises to the lysosome. Its subcellular location is the cytoplasmic vesicle. The protein localises to the phagosome. In terms of biological role, key component of innate and adaptive immunity. TLRs (Toll-like receptors) control host immune response against pathogens through recognition of molecular patterns specific to microorganisms. TLR9 is a nucleotide-sensing TLR which is activated by unmethylated cytidine-phosphate-guanosine (CpG) dinucleotides. Acts via MYD88 and TRAF6, leading to NF-kappa-B activation, cytokine secretion and the inflammatory response. Upon CpG stimulation, induces B-cell proliferation, activation, survival and antibody production. The chain is Toll-like receptor 9 (TLR9) from Sus scrofa (Pig).